The sequence spans 161 residues: Protein YzcX (161 aa).

The polypeptide is Protein YzcX (yzcX) (Escherichia coli (strain K12)).